We begin with the raw amino-acid sequence, 362 residues long: Mannose-1-phosphate guanyltransferase (362 aa).

The protein belongs to the transferase hexapeptide repeat family.

It localises to the cytoplasm. The catalysed reaction is alpha-D-mannose 1-phosphate + GTP + H(+) = GDP-alpha-D-mannose + diphosphate. It functions in the pathway nucleotide-sugar biosynthesis; GDP-alpha-D-mannose biosynthesis; GDP-alpha-D-mannose from alpha-D-mannose 1-phosphate (GTP route): step 1/1. Involved in cell wall synthesis where it is required for glycosylation. Involved in cell cycle progression through cell-size checkpoint. The protein is Mannose-1-phosphate guanyltransferase (MPG1) of Candida albicans (strain SC5314 / ATCC MYA-2876) (Yeast).